Consider the following 242-residue polypeptide: Probable L-ribulose-5-phosphate 4-epimerase UlaF (242 aa).

Substrate is bound by residues 31-32 (GN), 48-49 (SG), and 78-79 (SS). Aspartate 80, histidine 99, and histidine 101 together coordinate Zn(2+). The Proton donor/acceptor role is filled by aspartate 124. Histidine 175 is a binding site for Zn(2+). Residue tyrosine 234 is the Proton donor/acceptor of the active site.

The protein belongs to the aldolase class II family. AraD/FucA subfamily. Zn(2+) is required as a cofactor.

The enzyme catalyses L-ribulose 5-phosphate = D-xylulose 5-phosphate. Its pathway is cofactor degradation; L-ascorbate degradation; D-xylulose 5-phosphate from L-ascorbate: step 4/4. Functionally, catalyzes the isomerization of L-ribulose 5-phosphate to D-xylulose 5-phosphate. Is involved in the anaerobic L-ascorbate utilization. The protein is Probable L-ribulose-5-phosphate 4-epimerase UlaF of Mycoplasma pneumoniae (strain ATCC 29342 / M129 / Subtype 1) (Mycoplasmoides pneumoniae).